The chain runs to 345 residues: 4-hydroxy-2-oxovalerate aldolase 1 (345 aa).

One can recognise a Pyruvate carboxyltransferase domain in the interval 9-261 (IRVTDTSLRD…RTGIDFFAIA (253 aa)). 17 to 18 (RD) serves as a coordination point for substrate. A Mn(2+)-binding site is contributed by Asp18. The active-site Proton acceptor is the His21. Substrate is bound by residues Ser171 and His200. Residues His200 and His202 each contribute to the Mn(2+) site. Position 291 (Tyr291) interacts with substrate.

It belongs to the 4-hydroxy-2-oxovalerate aldolase family.

It carries out the reaction (S)-4-hydroxy-2-oxopentanoate = acetaldehyde + pyruvate. This is 4-hydroxy-2-oxovalerate aldolase 1 from Nocardia farcinica (strain IFM 10152).